A 278-amino-acid polypeptide reads, in one-letter code: Cytidine kinase (278 aa).

Residue 203-208 (TRGEKG) participates in ATP binding. Asp-237 acts as the Proton acceptor in catalysis.

The protein belongs to the carbohydrate kinase PfkB family. It depends on Mg(2+) as a cofactor.

It catalyses the reaction cytidine + ATP = CMP + ADP + H(+). In terms of biological role, involved in nucleoside degradation. Phosphorylates cytidine to CMP. Can also act on deoxycytidine and uridine, but is most active with cytidine. ATP is the most preferred phosphate donor, but it can also use GTP, CTP or UTP. This Thermococcus kodakarensis (strain ATCC BAA-918 / JCM 12380 / KOD1) (Pyrococcus kodakaraensis (strain KOD1)) protein is Cytidine kinase.